The sequence spans 208 residues: MKINVVDHPLIKHKLTLMRKKDTGPKEFRELLKEITLLIAYEATRHIETFETEIETPLEKTKGHFINDKDVVIIPILRAGLGMSDGILQLLPNASVGHIGIYRDPKTLEAVEYYAKFPKITDNSIVFVLDPMLATGVSSIKALEIVKKNGAKNIILVTLIASPEGTEKVNIEHPDVIIYTASLDKKLNSKGYILPGLGDAGDRLFRTK.

Residues R78, R103, and 130 to 138 (DPMLATGVS) contribute to the 5-phospho-alpha-D-ribose 1-diphosphate site. Uracil-binding positions include I193 and 198 to 200 (GDA). Position 199 (D199) interacts with 5-phospho-alpha-D-ribose 1-diphosphate.

The protein belongs to the UPRTase family. It depends on Mg(2+) as a cofactor.

It catalyses the reaction UMP + diphosphate = 5-phospho-alpha-D-ribose 1-diphosphate + uracil. It functions in the pathway pyrimidine metabolism; UMP biosynthesis via salvage pathway; UMP from uracil: step 1/1. With respect to regulation, allosterically activated by GTP. Functionally, catalyzes the conversion of uracil and 5-phospho-alpha-D-ribose 1-diphosphate (PRPP) to UMP and diphosphate. In Thermosipho melanesiensis (strain DSM 12029 / CIP 104789 / BI429), this protein is Uracil phosphoribosyltransferase.